The following is a 364-amino-acid chain: 4-hydroxythreonine-4-phosphate dehydrogenase (364 aa).

His-148 and Thr-149 together coordinate substrate. The a divalent metal cation site is built by His-177, His-216, and His-301. Residues Lys-309, Asn-318, and Arg-327 each coordinate substrate.

Belongs to the PdxA family. Homodimer. Zn(2+) serves as cofactor. Mg(2+) is required as a cofactor. Requires Co(2+) as cofactor.

The protein resides in the cytoplasm. The catalysed reaction is 4-(phosphooxy)-L-threonine + NAD(+) = 3-amino-2-oxopropyl phosphate + CO2 + NADH. It participates in cofactor biosynthesis; pyridoxine 5'-phosphate biosynthesis; pyridoxine 5'-phosphate from D-erythrose 4-phosphate: step 4/5. Its function is as follows. Catalyzes the NAD(P)-dependent oxidation of 4-(phosphooxy)-L-threonine (HTP) into 2-amino-3-oxo-4-(phosphooxy)butyric acid which spontaneously decarboxylates to form 3-amino-2-oxopropyl phosphate (AHAP). This is 4-hydroxythreonine-4-phosphate dehydrogenase from Campylobacter jejuni subsp. jejuni serotype O:23/36 (strain 81-176).